The sequence spans 108 residues: UPF0060 membrane protein YnfA (108 aa).

The Periplasmic portion of the chain corresponds to 1–5 (MIKTT). The chain crosses the membrane as a helical span at residues 6–26 (LLFFATALCEIIGCFLPWLWL). The Cytoplasmic segment spans residues 27–30 (KRNA). Residues 31–51 (SIWLLLPAGISLALFVWLLTL) traverse the membrane as a helical segment. At 52 to 60 (HPAASGRVY) the chain is on the periplasmic side. The chain crosses the membrane as a helical span at residues 61 to 81 (AAYGGVYVCTALIWLRVVDGV). Residues 82-84 (KLT) are Cytoplasmic-facing. The chain crosses the membrane as a helical span at residues 85–105 (LYDWTGALIALCGMLIIVAGW). At 106–108 (GRT) the chain is on the periplasmic side.

This sequence belongs to the UPF0060 family.

The protein resides in the cell inner membrane. This is UPF0060 membrane protein YnfA from Escherichia coli O127:H6 (strain E2348/69 / EPEC).